We begin with the raw amino-acid sequence, 337 residues long: Anthranilate phosphoribosyltransferase (337 aa).

5-phospho-alpha-D-ribose 1-diphosphate-binding positions include Gly-81, Gly-84–Asp-85, Thr-89, Asn-91–Thr-94, Lys-109–Ser-117, and Thr-121. Gly-81 is a binding site for anthranilate. Ser-93 is a binding site for Mg(2+). Anthranilate is bound at residue Asn-112. Arg-167 contacts anthranilate. Mg(2+) contacts are provided by Asp-225 and Glu-226.

This sequence belongs to the anthranilate phosphoribosyltransferase family. In terms of assembly, homodimer. Requires Mg(2+) as cofactor.

It catalyses the reaction N-(5-phospho-beta-D-ribosyl)anthranilate + diphosphate = 5-phospho-alpha-D-ribose 1-diphosphate + anthranilate. The protein operates within amino-acid biosynthesis; L-tryptophan biosynthesis; L-tryptophan from chorismate: step 2/5. Its function is as follows. Catalyzes the transfer of the phosphoribosyl group of 5-phosphorylribose-1-pyrophosphate (PRPP) to anthranilate to yield N-(5'-phosphoribosyl)-anthranilate (PRA). The protein is Anthranilate phosphoribosyltransferase of Sinorhizobium medicae (strain WSM419) (Ensifer medicae).